The chain runs to 371 residues: tRNA-specific 2-thiouridylase MnmA (371 aa).

ATP-binding positions include 13–20 (GMSGGVDS) and M39. The tract at residues 99–101 (NPD) is interaction with target base in tRNA. Residue C104 is the Nucleophile of the active site. C104 and C200 form a disulfide bridge. G128 is an ATP binding site. Positions 150–152 (KDQ) are interaction with tRNA. C200 serves as the catalytic Cysteine persulfide intermediate. The tract at residues 308 to 309 (RY) is interaction with tRNA.

The protein belongs to the MnmA/TRMU family.

It localises to the cytoplasm. The enzyme catalyses S-sulfanyl-L-cysteinyl-[protein] + uridine(34) in tRNA + AH2 + ATP = 2-thiouridine(34) in tRNA + L-cysteinyl-[protein] + A + AMP + diphosphate + H(+). Functionally, catalyzes the 2-thiolation of uridine at the wobble position (U34) of tRNA, leading to the formation of s(2)U34. The sequence is that of tRNA-specific 2-thiouridylase MnmA from Bacillus mycoides (strain KBAB4) (Bacillus weihenstephanensis).